The following is a 431-amino-acid chain: Glucose-1-phosphate adenylyltransferase (431 aa).

Lysine 39 provides a ligand contact to beta-D-fructose 1,6-bisphosphate. Residues arginine 40, histidine 46, and arginine 52 each contribute to the AMP site. Residue tyrosine 114 coordinates alpha-D-glucose 1-phosphate. Residue arginine 130 coordinates AMP. Alpha-D-glucose 1-phosphate contacts are provided by residues glycine 179, 194-195 (EK), and serine 212. AMP-binding residues include glutamate 370 and arginine 386. Beta-D-fructose 1,6-bisphosphate-binding positions include 419–423 (REMLR) and 429–431 (QER).

Belongs to the bacterial/plant glucose-1-phosphate adenylyltransferase family. Homotetramer.

The catalysed reaction is alpha-D-glucose 1-phosphate + ATP + H(+) = ADP-alpha-D-glucose + diphosphate. It participates in glycan biosynthesis; glycogen biosynthesis. Its activity is regulated as follows. Allosterically activated by fructose-1,6-bisphosphate (F16BP) and inhibited by AMP. Functionally, involved in the biosynthesis of ADP-glucose, a building block required for the elongation reactions to produce glycogen. Catalyzes the reaction between ATP and alpha-D-glucose 1-phosphate (G1P) to produce pyrophosphate and ADP-Glc. The chain is Glucose-1-phosphate adenylyltransferase from Salmonella paratyphi C (strain RKS4594).